The chain runs to 572 residues: Enolase 4 (572 aa).

Residues 181-204 (IEPVPSPVTSPALGKKKGSGKGKK) form a disordered region. Over residues 194–204 (GKKKGSGKGKK) the composition is skewed to basic residues. A substrate-binding site is contributed by glutamate 288. Lysine 468 (proton acceptor) is an active-site residue. Lysine 519 is a binding site for substrate.

This sequence belongs to the enolase family.

It catalyses the reaction (2R)-2-phosphoglycerate = phosphoenolpyruvate + H2O. It participates in carbohydrate degradation; glycolysis; pyruvate from D-glyceraldehyde 3-phosphate: step 4/5. The protein is Enolase 4 (eno4) of Xenopus laevis (African clawed frog).